Reading from the N-terminus, the 831-residue chain is Probable inactive serine/threonine-protein kinase DDB_G0274613 (831 aa).

An RING-type zinc finger spans residues 9 to 63 (CSICSEEVIDFAAIFSSNKKFGDKACKHNFCVSCLTYLMEYNTRNKKALCCPICR). Residues 83–348 (RKLSSAQIFL…LEEMKLLYQF (266 aa)) adopt a coiled-coil conformation. Positions 414–787 (QIHKVSIGNG…ANQAAFHKFF (374 aa)) constitute a Protein kinase domain. Residues 657-703 (NNNNNNNNNNNNNNNNNNNNNNNNNNNNNNNNNNNNNNNNNIESNFN) form a disordered region.

This sequence belongs to the protein kinase superfamily. CMGC Ser/Thr protein kinase family.

This Dictyostelium discoideum (Social amoeba) protein is Probable inactive serine/threonine-protein kinase DDB_G0274613.